A 317-amino-acid chain; its full sequence is Acetyl-coenzyme A carboxylase carboxyl transferase subunit alpha (317 aa).

The CoA carboxyltransferase C-terminal domain maps to 40–293 (LEGRVRDAMM…GTVIADALKE (254 aa)).

Belongs to the AccA family. In terms of assembly, acetyl-CoA carboxylase is a heterohexamer composed of biotin carboxyl carrier protein (AccB), biotin carboxylase (AccC) and two subunits each of ACCase subunit alpha (AccA) and ACCase subunit beta (AccD).

It localises to the cytoplasm. It carries out the reaction N(6)-carboxybiotinyl-L-lysyl-[protein] + acetyl-CoA = N(6)-biotinyl-L-lysyl-[protein] + malonyl-CoA. It functions in the pathway lipid metabolism; malonyl-CoA biosynthesis; malonyl-CoA from acetyl-CoA: step 1/1. Component of the acetyl coenzyme A carboxylase (ACC) complex. First, biotin carboxylase catalyzes the carboxylation of biotin on its carrier protein (BCCP) and then the CO(2) group is transferred by the carboxyltransferase to acetyl-CoA to form malonyl-CoA. The protein is Acetyl-coenzyme A carboxylase carboxyl transferase subunit alpha of Sinorhizobium fredii (strain NBRC 101917 / NGR234).